We begin with the raw amino-acid sequence, 350 residues long: DNA primase small subunit PriS (350 aa).

Residues aspartate 97, aspartate 99, and aspartate 251 contribute to the active site.

The protein belongs to the eukaryotic-type primase small subunit family. Heterodimer of a small subunit (PriS) and a large subunit (PriL). It depends on Mg(2+) as a cofactor. The cofactor is Mn(2+). Zn(2+) is required as a cofactor.

In terms of biological role, catalytic subunit of DNA primase, an RNA polymerase that catalyzes the synthesis of short RNA molecules used as primers for DNA polymerase during DNA replication. The small subunit contains the primase catalytic core and has DNA synthesis activity on its own. Binding to the large subunit stabilizes and modulates the activity, increasing the rate of DNA synthesis while decreasing the length of the DNA fragments, and conferring RNA synthesis capability. The DNA polymerase activity may enable DNA primase to also catalyze primer extension after primer synthesis. May also play a role in DNA repair. The sequence is that of DNA primase small subunit PriS from Methanocaldococcus jannaschii (strain ATCC 43067 / DSM 2661 / JAL-1 / JCM 10045 / NBRC 100440) (Methanococcus jannaschii).